The primary structure comprises 503 residues: ATP synthase subunit alpha (503 aa).

Gly169–Thr176 provides a ligand contact to ATP.

Belongs to the ATPase alpha/beta chains family. As to quaternary structure, F-type ATPases have 2 components, CF(1) - the catalytic core - and CF(0) - the membrane proton channel. CF(1) has five subunits: alpha(3), beta(3), gamma(1), delta(1), epsilon(1). CF(0) has three main subunits: a(1), b(2) and c(9-12). The alpha and beta chains form an alternating ring which encloses part of the gamma chain. CF(1) is attached to CF(0) by a central stalk formed by the gamma and epsilon chains, while a peripheral stalk is formed by the delta and b chains.

The protein resides in the cell membrane. It catalyses the reaction ATP + H2O + 4 H(+)(in) = ADP + phosphate + 5 H(+)(out). Functionally, produces ATP from ADP in the presence of a proton gradient across the membrane. The alpha chain is a regulatory subunit. In Lactobacillus delbrueckii subsp. bulgaricus (strain ATCC BAA-365 / Lb-18), this protein is ATP synthase subunit alpha.